Consider the following 232-residue polypeptide: Sugar fermentation stimulation protein homolog (232 aa).

The protein belongs to the SfsA family.

In Acidithiobacillus ferrooxidans (strain ATCC 23270 / DSM 14882 / CIP 104768 / NCIMB 8455) (Ferrobacillus ferrooxidans (strain ATCC 23270)), this protein is Sugar fermentation stimulation protein homolog.